Consider the following 510-residue polypeptide: Hepatic triacylglycerol lipase (510 aa).

The N-terminal stretch at 1 to 21 (MGNPLQISIFLVFCIFIQSSA) is a signal peptide. An N-linked (GlcNAc...) asparagine glycan is attached at Asn-79. Ser-169 functions as the Nucleophile in the catalytic mechanism. Asp-195 (charge relay system) is an active-site residue. The segment at 255 to 278 (CHFLELYKHIAEHGLNAITQTIKC) is essential for determining substrate specificity. The active-site Charge relay system is His-280. The 135-residue stretch at 353–487 (YHYQFKIQFI…HPSQEKVFVN (135 aa)) folds into the PLAT domain. Asn-398 carries N-linked (GlcNAc...) asparagine glycosylation.

This sequence belongs to the AB hydrolase superfamily. Lipase family. As to quaternary structure, homodimer.

The protein resides in the secreted. It carries out the reaction a triacylglycerol + H2O = a diacylglycerol + a fatty acid + H(+). The catalysed reaction is a 1-acyl-sn-glycero-3-phosphocholine + H2O = sn-glycerol 3-phosphocholine + a fatty acid + H(+). The enzyme catalyses a 1,2-diacyl-sn-glycero-3-phosphocholine + H2O = a 2-acyl-sn-glycero-3-phosphocholine + a fatty acid + H(+). It catalyses the reaction 1,2,3-tri-(9Z-octadecenoyl)-glycerol + H2O = di-(9Z)-octadecenoylglycerol + (9Z)-octadecenoate + H(+). It carries out the reaction 1,2-di-(9Z-octadecenoyl)-sn-glycero-3-phosphocholine + H2O = (9Z-octadecenoyl)-sn-glycero-3-phosphocholine + (9Z)-octadecenoate + H(+). The catalysed reaction is 1,2,3-tributanoylglycerol + H2O = dibutanoylglycerol + butanoate + H(+). The enzyme catalyses 1,2-dihexadecanoyl-sn-glycero-3-phosphocholine + H2O = hexadecanoyl-sn-glycero-3-phosphocholine + hexadecanoate + H(+). It catalyses the reaction 1,2-di-(9Z-octadecenoyl)-sn-glycerol + H2O = 2-(9Z-octadecenoyl)-glycerol + (9Z)-octadecenoate + H(+). It carries out the reaction 1,2,3-tri-(9Z-octadecenoyl)-glycerol + H2O = 2,3-di-(9Z)-octadecenoyl-sn-glycerol + (9Z)-octadecenoate + H(+). The catalysed reaction is 1-(9Z-octadecenoyl)-sn-glycero-3-phospho-L-serine + H2O = sn-glycero-3-phospho-L-serine + (9Z)-octadecenoate + H(+). The enzyme catalyses 1-hexadecanoyl-sn-glycero-3-phosphocholine + H2O = sn-glycerol 3-phosphocholine + hexadecanoate + H(+). It catalyses the reaction 1,3-di-(9Z-octadecenoyl)-glycerol + H2O = 3-(9Z-octadecenoyl)-sn-glycerol + (9Z)-octadecenoate + H(+). Catalyzes the hydrolysis of triglycerides and phospholipids present in circulating plasma lipoproteins, including chylomicrons, intermediate density lipoproteins (IDL), low density lipoproteins (LDL) of large size and high density lipoproteins (HDL), releasing free fatty acids (FFA) and smaller lipoprotein particles. Also exhibits lysophospholipase activity. Can hydrolyze both neutral lipid and phospholipid substrates but shows a greater binding affinity for neutral lipid substrates than phospholipid substrates. In native LDL, preferentially hydrolyzes the phosphatidylcholine species containing polyunsaturated fatty acids at sn-2 position. In Mus musculus (Mouse), this protein is Hepatic triacylglycerol lipase (Lipc).